A 358-amino-acid polypeptide reads, in one-letter code: Pre-mRNA-splicing factor spp2 (358 aa).

Disordered stretches follow at residues 1 to 250 (MTDQ…RAVP) and 298 to 358 (AWNQ…RGDR). Basic residues predominate over residues 24-40 (KTKKPSRPTHTRRHHAR). Basic and acidic residues-rich tracts occupy residues 80 to 137 (LENR…DASR) and 145 to 160 (RSRDRDHKPKDPKDLQ). The segment covering 174–185 (NPKSTTTATSSF) has biased composition (polar residues). Composition is skewed to basic and acidic residues over residues 233-246 (SSHDRDRSPDHSDY) and 309-358 (GDSR…RGDR).

It belongs to the SPP2 family. In terms of assembly, associated with the spliceosome.

It is found in the nucleus. Functionally, involved in spliceosome maturation and the first step of pre-mRNA splicing. The protein is Pre-mRNA-splicing factor spp2 (msp-40) of Neurospora crassa (strain ATCC 24698 / 74-OR23-1A / CBS 708.71 / DSM 1257 / FGSC 987).